The primary structure comprises 246 residues: Pyridoxine 5'-phosphate synthase (246 aa).

Asn12 lines the 3-amino-2-oxopropyl phosphate pocket. 14-15 (DH) contributes to the 1-deoxy-D-xylulose 5-phosphate binding site. Arg23 contacts 3-amino-2-oxopropyl phosphate. The active-site Proton acceptor is His48. Arg50 and His55 together coordinate 1-deoxy-D-xylulose 5-phosphate. Glu75 serves as the catalytic Proton acceptor. A 1-deoxy-D-xylulose 5-phosphate-binding site is contributed by Thr105. Catalysis depends on His196, which acts as the Proton donor. 3-amino-2-oxopropyl phosphate-binding positions include Gly197 and 218–219 (GH).

The protein belongs to the PNP synthase family. Homooctamer; tetramer of dimers.

The protein localises to the cytoplasm. The enzyme catalyses 3-amino-2-oxopropyl phosphate + 1-deoxy-D-xylulose 5-phosphate = pyridoxine 5'-phosphate + phosphate + 2 H2O + H(+). Its pathway is cofactor biosynthesis; pyridoxine 5'-phosphate biosynthesis; pyridoxine 5'-phosphate from D-erythrose 4-phosphate: step 5/5. In terms of biological role, catalyzes the complicated ring closure reaction between the two acyclic compounds 1-deoxy-D-xylulose-5-phosphate (DXP) and 3-amino-2-oxopropyl phosphate (1-amino-acetone-3-phosphate or AAP) to form pyridoxine 5'-phosphate (PNP) and inorganic phosphate. The sequence is that of Pyridoxine 5'-phosphate synthase from Thioalkalivibrio sulfidiphilus (strain HL-EbGR7).